The chain runs to 236 residues: Activating transcription factor of chaperone (236 aa).

The interval 117-185 (HRASQLASPQ…KNAATRYRQK (69 aa)) is disordered. Residues 120 to 137 (SQLASPQHSSSSANASPR) show a composition bias toward low complexity. Residues 162 to 175 (RPVDDRRSRKKEQN) show a composition bias toward basic and acidic residues. Residues 165–228 (DDRRSRKKEQ…RYLKALMRDL (64 aa)) enclose the bZIP domain. The basic motif stretch occupies residues 167–187 (RRSRKKEQNKNAATRYRQKKK). The interval 193 to 228 (LLKEEQTLRQRHTELGEKCSDLQREIRYLKALMRDL) is leucine-zipper.

This sequence belongs to the bZIP family. Binds DNA as a dimer.

The protein localises to the nucleus. Its function is as follows. Transcriptional activator that acts in the unfolded protein response (UPR) pathway. Acts during endoplasmic reticulum (ER) stress by activating UPR target genes via direct binding to the UPR element (UPRE) (5'-GGAACTGGACAGCGTGTCGAAA-3'). Activates expression of ER chaperones ERP72 and PDI. This is Activating transcription factor of chaperone from Bombyx mori (Silk moth).